A 209-amino-acid polypeptide reads, in one-letter code: Orotate phosphoribosyltransferase (209 aa).

5-phospho-alpha-D-ribose 1-diphosphate contacts are provided by residues R96, K100, H102, and 122–130 (EDLISTGGS). Position 126 (S126) interacts with orotate.

This sequence belongs to the purine/pyrimidine phosphoribosyltransferase family. PyrE subfamily. As to quaternary structure, homodimer. Mg(2+) is required as a cofactor.

It catalyses the reaction orotidine 5'-phosphate + diphosphate = orotate + 5-phospho-alpha-D-ribose 1-diphosphate. The protein operates within pyrimidine metabolism; UMP biosynthesis via de novo pathway; UMP from orotate: step 1/2. Catalyzes the transfer of a ribosyl phosphate group from 5-phosphoribose 1-diphosphate to orotate, leading to the formation of orotidine monophosphate (OMP). The chain is Orotate phosphoribosyltransferase from Streptococcus agalactiae serotype Ia (strain ATCC 27591 / A909 / CDC SS700).